The sequence spans 784 residues: Cell wall protein Lmo0130 (784 aa).

The first 34 residues, 1 to 34, serve as a signal peptide directing secretion; the sequence is MKVNKFFKKTTHVLLVAGLTIGLTAPFTGTTAQA. Residues 690–761 are disordered; sequence ATTPPDNGNG…NTSLPTTGDT (72 aa). The span at 697 to 729 shows a compositional bias: gly residues; it reads GNGGTDNGNGNGNNGGTDGNGGTNNGNGSGTNG. Positions 730 to 759 are enriched in low complexity; the sequence is GTTTTEDPTTTTSNTSTTGTSSNTSLPTTG. Residues 755-759 carry the LPXTG sorting signal motif; the sequence is LPTTG. Threonine 758 carries the pentaglycyl murein peptidoglycan amidated threonine modification. A propeptide spans 759-784 (removed by sortase A); that stretch reads GDTAGLATVFGVILTTTALYVLRKRS.

It localises to the secreted. It is found in the cell wall. The protein is Cell wall protein Lmo0130 of Listeria monocytogenes serovar 1/2a (strain ATCC BAA-679 / EGD-e).